The primary structure comprises 433 residues: uncharacterized protein (433 aa).

It is found in the virion. This is an uncharacterized protein from Acanthamoeba polyphaga (Amoeba).